The following is a 583-amino-acid chain: 15-cis-phytoene desaturase, chloroplastic/chromoplastic (583 aa).

The N-terminal 111 residues, 1 to 111 (MPQIGLVSAV…FRASPRPTKP (111 aa)), are a transit peptide targeting the chloroplast and chromoplast. Residues 118–134 (GAGL…ADAG), 141–142 (EA), Lys-149, 166–167 (HI), and Tyr-172 each bind FAD. Arg-307 contributes to the substrate binding site. Residues Ile-349 and Asp-538 each contribute to the FAD site. Ala-546 serves as a coordination point for substrate. Position 548 (Met-548) interacts with FAD.

Belongs to the carotenoid/retinoid oxidoreductase family. In terms of assembly, homotetramer. The cofactor is FAD.

It is found in the plastid. The protein resides in the chloroplast. The protein localises to the chromoplast. It localises to the membrane. It carries out the reaction 2 a plastoquinone + 15-cis-phytoene = 9,9',15-tri-cis-zeta-carotene + 2 a plastoquinol. The protein operates within carotenoid biosynthesis; lycopene biosynthesis. Converts phytoene into zeta-carotene via the intermediary of phytofluene by the symmetrical introduction of two double bonds at the C-11 and C-11' positions of phytoene with a concomitant isomerization of two neighboring double bonds at the C9 and C9' positions from trans to cis. This chain is 15-cis-phytoene desaturase, chloroplastic/chromoplastic (PDS), found in Solanum lycopersicum (Tomato).